We begin with the raw amino-acid sequence, 337 residues long: MADTAPQPSKRKRERDPEEAEAPSTEEKEARVGNGTSAPVRLPFSGFRVKKVLRESARDKIIFLHGKVNEASGDGDGEDAIVILEKTPFQVDQVAQLLMGSPELQLQFSNDIYSTYHLFPPRQLSDVKTTVVYPATEKHLQKYLHQDLHLVRETGGDYKNITLPHLESQSLSIQWVYNILDKKAEADRIVFENPDPSDGFVLIPDLKWNQKQLDDLYLIAICHRRGIKSLRDLTPEHLPLLRNILREGQEAILQRYQVTGDRLRVYLHYLPSYYHLHVHFTALGFEAPGAGVERAHLLAEVIENLEQDPEHYQRRTLTFALRADDPLLTLLQEAQRS.

Residues 1–37 (MADTAPQPSKRKRERDPEEAEAPSTEEKEARVGNGTS) are disordered. At A2 the chain carries N-acetylalanine. The nuclear localization signal (NLS) signature appears at 10–13 (KRKR). Phosphoserine occurs at positions 24 and 101. N6-acetyllysine occurs at positions 138 and 142. The nuclear export sequence (NES) signature appears at 142-154 (KYLHQDLHLVRET). Substrate-binding positions include W175, E185, D205, K207, and 268–279 (HYLPSYYHLHVH). The short motif at 275–279 (HLHVH) is the Histidine triad motif element. Residue H277 is the Nucleophile of the active site.

The protein belongs to the HIT family. In terms of assembly, homodimer. Associates with components of the exosome multienzyme ribonuclease complex, such as EXOSC3 and EXOSC4. Interacts with NDOR1.

It is found in the cytoplasm. The protein resides in the nucleus. It catalyses the reaction a 5'-end (N(7)-methyl 5'-triphosphoguanosine)-ribonucleoside in mRNA + H2O = N(7)-methyl-GMP + a 5'-end diphospho-ribonucleoside in mRNA + 2 H(+). The hydrolytic product 7-methylguanosine diphosphate (m7GDP) efficiently inhibits the decapping scavenger activity and acts as a competitive inhibitor in vitro. Inhibited by 2,4-diaminoquinazoline. Its function is as follows. Decapping scavenger enzyme that catalyzes the cleavage of a residual cap structure following the degradation of mRNAs by the 3'-&gt;5' exosome-mediated mRNA decay pathway. Hydrolyzes cap analog structures like 7-methylguanosine nucleoside triphosphate (m7GpppG) with up to 10 nucleotide substrates (small capped oligoribonucleotides) and specifically releases 5'-phosphorylated RNA fragments and 7-methylguanosine monophosphate (m7GMP). Cleaves cap analog structures like tri-methyl guanosine nucleoside triphosphate (m3(2,2,7)GpppG) with very poor efficiency. Does not hydrolyze unmethylated cap analog (GpppG) and shows no decapping activity on intact m7GpppG-capped mRNA molecules longer than 25 nucleotides. Does not hydrolyze 7-methylguanosine diphosphate (m7GDP) to m7GMP. May also play a role in the 5'-&gt;3 mRNA decay pathway; m7GDP, the downstream product released by the 5'-&gt;3' mRNA mediated decapping activity, may be also converted by DCPS to m7GMP. Binds to m7GpppG and strongly to m7GDP. Plays a role in first intron splicing of pre-mRNAs. Inhibits activation-induced cell death. The sequence is that of m7GpppX diphosphatase (DCPS) from Sus scrofa (Pig).